The primary structure comprises 420 residues: F-box/LRR-repeat protein At2g43260 (420 aa).

The 47-residue stretch at 7-53 (NPNSIDILPELLEEVLLRLPTKSILKCRIVSKQWRSLLESSRFAERH) folds into the F-box domain. 2 LRR repeats span residues 112 to 135 (QDWI…LNHN) and 226 to 251 (VYRI…QITV).

The protein is F-box/LRR-repeat protein At2g43260 of Arabidopsis thaliana (Mouse-ear cress).